The chain runs to 99 residues: Mitochondrial import receptor subunit TOM9-2 (99 aa).

Residues 2 to 51 are Cytoplasmic-facing; sequence AAKRIGAGKSGGGDPNILARISNSEIVSQGRRAAGDAVEVSKKLLRSTGK. Residues 52-69 form a helical membrane-spanning segment; it reads AAWIAGTTFLILVVPLII. The Mitochondrial intermembrane segment spans residues 70–99; that stretch reads EMDREAQINEIELQQASLLGAPPSPMQRGL.

Belongs to the Tom22 family. As to quaternary structure, forms part of the preprotein translocase complex of the outer mitochondrial membrane (TOM complex) which consists of at least 6 different proteins (TOM5, TOM6, TOM7, TOM20, TOM22/TOM9 and TOM40). Expressed in young cotyledons, roots, flowers and leaves.

The protein localises to the mitochondrion outer membrane. Central component of the receptor complex responsible for the recognition and translocation of cytosolically synthesized mitochondrial preproteins. Together with TOM20 functions as the transit peptide receptor at the surface of the mitochondrion outer membrane and facilitates the movement of preproteins into the translocation pore. This chain is Mitochondrial import receptor subunit TOM9-2 (TOM9-2), found in Arabidopsis thaliana (Mouse-ear cress).